We begin with the raw amino-acid sequence, 267 residues long: PHD finger protein ALFIN-LIKE 7 (267 aa).

Residues 162 to 207 (TKVSNGSSKSNKSNPKPSKQSNSNSKPAKPPQPKDEEDSGPEGAED) form a disordered region. Low complexity predominate over residues 165-188 (SNGSSKSNKSNPKPSKQSNSNSKP). Residues 196–207 (DEEDSGPEGAED) show a composition bias toward acidic residues. The PHD-type zinc finger occupies 211–263 (AYMCGACGETYANGEFWICCDVCEKWFHGKCVRITPAKAEHIKQYKCPGCSSK).

Belongs to the Alfin family. Interacts with H3K4me3 and to a lesser extent with H3K4me2.

Its subcellular location is the nucleus. Functionally, histone-binding component that specifically recognizes H3 tails trimethylated on 'Lys-4' (H3K4me3), which mark transcription start sites of virtually all active genes. This chain is PHD finger protein ALFIN-LIKE 7, found in Oryza sativa subsp. indica (Rice).